Consider the following 217-residue polypeptide: Thiamine-phosphate synthase (217 aa).

4-amino-2-methyl-5-(diphosphooxymethyl)pyrimidine contacts are provided by residues 39 to 43 (QLRRK) and Asn-71. The Mg(2+) site is built by Asp-72 and Asp-91. Ser-110 contacts 4-amino-2-methyl-5-(diphosphooxymethyl)pyrimidine. Residue 137-139 (SPT) coordinates 2-[(2R,5Z)-2-carboxy-4-methylthiazol-5(2H)-ylidene]ethyl phosphate. Position 140 (Lys-140) interacts with 4-amino-2-methyl-5-(diphosphooxymethyl)pyrimidine. 2-[(2R,5Z)-2-carboxy-4-methylthiazol-5(2H)-ylidene]ethyl phosphate-binding positions include Gly-173 and 193-194 (IS).

This sequence belongs to the thiamine-phosphate synthase family. Mg(2+) serves as cofactor.

The enzyme catalyses 2-[(2R,5Z)-2-carboxy-4-methylthiazol-5(2H)-ylidene]ethyl phosphate + 4-amino-2-methyl-5-(diphosphooxymethyl)pyrimidine + 2 H(+) = thiamine phosphate + CO2 + diphosphate. The catalysed reaction is 2-(2-carboxy-4-methylthiazol-5-yl)ethyl phosphate + 4-amino-2-methyl-5-(diphosphooxymethyl)pyrimidine + 2 H(+) = thiamine phosphate + CO2 + diphosphate. It carries out the reaction 4-methyl-5-(2-phosphooxyethyl)-thiazole + 4-amino-2-methyl-5-(diphosphooxymethyl)pyrimidine + H(+) = thiamine phosphate + diphosphate. It functions in the pathway cofactor biosynthesis; thiamine diphosphate biosynthesis; thiamine phosphate from 4-amino-2-methyl-5-diphosphomethylpyrimidine and 4-methyl-5-(2-phosphoethyl)-thiazole: step 1/1. Condenses 4-methyl-5-(beta-hydroxyethyl)thiazole monophosphate (THZ-P) and 2-methyl-4-amino-5-hydroxymethyl pyrimidine pyrophosphate (HMP-PP) to form thiamine monophosphate (TMP). This Bordetella bronchiseptica (strain ATCC BAA-588 / NCTC 13252 / RB50) (Alcaligenes bronchisepticus) protein is Thiamine-phosphate synthase.